Here is a 180-residue protein sequence, read N- to C-terminus: ATP-dependent protease subunit HslV (180 aa).

Thr8 is a catalytic residue. Na(+) is bound by residues Ser165, Cys168, and Thr171.

This sequence belongs to the peptidase T1B family. HslV subfamily. In terms of assembly, a double ring-shaped homohexamer of HslV is capped on each side by a ring-shaped HslU homohexamer. The assembly of the HslU/HslV complex is dependent on binding of ATP.

It is found in the cytoplasm. It catalyses the reaction ATP-dependent cleavage of peptide bonds with broad specificity.. With respect to regulation, allosterically activated by HslU binding. In terms of biological role, protease subunit of a proteasome-like degradation complex believed to be a general protein degrading machinery. The polypeptide is ATP-dependent protease subunit HslV (Staphylococcus saprophyticus subsp. saprophyticus (strain ATCC 15305 / DSM 20229 / NCIMB 8711 / NCTC 7292 / S-41)).